A 306-amino-acid polypeptide reads, in one-letter code: Non-specific ribonucleoside hydrolase RihC (306 aa).

Residue histidine 235 is part of the active site.

Belongs to the IUNH family. RihC subfamily.

Its function is as follows. Hydrolyzes both purine and pyrimidine ribonucleosides with a broad-substrate specificity. This chain is Non-specific ribonucleoside hydrolase RihC, found in Salmonella dublin (strain CT_02021853).